The chain runs to 282 residues: Energy-coupling factor transporter ATP-binding protein EcfA1 (282 aa).

The 235-residue stretch at 9–243 (IEIDNLSFKY…NDELLNIGLD (235 aa)) folds into the ABC transporter domain. 43–50 (GHNGSGKS) contributes to the ATP binding site.

It belongs to the ABC transporter superfamily. Energy-coupling factor EcfA family. Forms a stable energy-coupling factor (ECF) transporter complex composed of 2 membrane-embedded substrate-binding proteins (S component), 2 ATP-binding proteins (A component) and 2 transmembrane proteins (T component).

Its subcellular location is the cell membrane. In terms of biological role, ATP-binding (A) component of a common energy-coupling factor (ECF) ABC-transporter complex. Unlike classic ABC transporters this ECF transporter provides the energy necessary to transport a number of different substrates. The protein is Energy-coupling factor transporter ATP-binding protein EcfA1 of Ligilactobacillus salivarius (strain UCC118) (Lactobacillus salivarius).